The sequence spans 364 residues: Chorismate synthase (364 aa).

NADP(+)-binding residues include Arg-48 and Arg-54. FMN is bound by residues 125–127, 238–239, Gly-278, 293–297, and Arg-319; these read RSS, NA, and KPTSS.

Belongs to the chorismate synthase family. Homotetramer. The cofactor is FMNH2.

It carries out the reaction 5-O-(1-carboxyvinyl)-3-phosphoshikimate = chorismate + phosphate. It participates in metabolic intermediate biosynthesis; chorismate biosynthesis; chorismate from D-erythrose 4-phosphate and phosphoenolpyruvate: step 7/7. Functionally, catalyzes the anti-1,4-elimination of the C-3 phosphate and the C-6 proR hydrogen from 5-enolpyruvylshikimate-3-phosphate (EPSP) to yield chorismate, which is the branch point compound that serves as the starting substrate for the three terminal pathways of aromatic amino acid biosynthesis. This reaction introduces a second double bond into the aromatic ring system. In Shewanella loihica (strain ATCC BAA-1088 / PV-4), this protein is Chorismate synthase.